Consider the following 204-residue polypeptide: Probable dTDP-4-oxo-2,6-dideoxy-D-glucose 3,5-epimerase (204 aa).

Residues Arg21, Glu26, 45 to 47 (QAN), Lys70, and His117 contribute to the substrate site. The active-site Proton donor is the Tyr130. A substrate-binding site is contributed by Glu141. The disordered stretch occupies residues 164–204 (VGEGTPTHRPWRRPRRPGILPDYEGVPGALHRGGGRRGTGP).

It belongs to the dTDP-4-dehydrorhamnose 3,5-epimerase family.

Its pathway is antibiotic biosynthesis. Its function is as follows. Involved in the biosynthesis of one of the two 2,6-deoxysugars, dTDP-L-oleandrose, attached to the macrolactone ring oleandolide to produce the aglycone antibiotic oleandomycin. Probably catalyzes the conversion of dTDP-4-keto-2,6-dideoxy-alpha-D-glucose to dTDP-4-keto-2,6-dideoxy-beta-L-galactose. The sequence is that of Probable dTDP-4-oxo-2,6-dideoxy-D-glucose 3,5-epimerase from Streptomyces antibioticus.